Here is a 259-residue protein sequence, read N- to C-terminus: 5'-nucleotidase SurE (259 aa).

Positions 8, 9, 39, and 93 each coordinate a divalent metal cation.

The protein belongs to the SurE nucleotidase family. Requires a divalent metal cation as cofactor.

It localises to the cytoplasm. It carries out the reaction a ribonucleoside 5'-phosphate + H2O = a ribonucleoside + phosphate. Functionally, nucleotidase that shows phosphatase activity on nucleoside 5'-monophosphates. The protein is 5'-nucleotidase SurE of Thermococcus kodakarensis (strain ATCC BAA-918 / JCM 12380 / KOD1) (Pyrococcus kodakaraensis (strain KOD1)).